A 219-amino-acid chain; its full sequence is Oxaloacetate tautomerase YcgM (219 aa).

Mg(2+) is bound by residues glutamate 70, glutamate 72, and aspartate 101.

The protein belongs to the FAH family. Requires a divalent metal cation as cofactor.

The catalysed reaction is oxaloacetate = enol-oxaloacetate. Its function is as follows. Tautomerase that converts enol-oxaloacetate to the keto form of oxaloacetate. The chain is Oxaloacetate tautomerase YcgM from Escherichia coli (strain K12).